Here is a 100-residue protein sequence, read N- to C-terminus: Large ribosomal subunit protein uL23 (100 aa).

This sequence belongs to the universal ribosomal protein uL23 family. In terms of assembly, part of the 50S ribosomal subunit. Contacts protein L29, and trigger factor when it is bound to the ribosome.

Functionally, one of the early assembly proteins it binds 23S rRNA. One of the proteins that surrounds the polypeptide exit tunnel on the outside of the ribosome. Forms the main docking site for trigger factor binding to the ribosome. The protein is Large ribosomal subunit protein uL23 of Shewanella frigidimarina (strain NCIMB 400).